The chain runs to 590 residues: UvrABC system protein C (590 aa).

Residues 11 to 85 (ETPGVYLWKR…IKAHRPLYNV (75 aa)) form the GIY-YIG domain. Positions 194 to 229 (DGLLQELEAKMREAARRLEFERAAEIRDQMEALRAF) constitute a UVR domain.

It belongs to the UvrC family. In terms of assembly, interacts with UvrB in an incision complex.

It localises to the cytoplasm. The UvrABC repair system catalyzes the recognition and processing of DNA lesions. UvrC both incises the 5' and 3' sides of the lesion. The N-terminal half is responsible for the 3' incision and the C-terminal half is responsible for the 5' incision. The polypeptide is UvrABC system protein C (Thermus thermophilus (strain ATCC 27634 / DSM 579 / HB8)).